A 949-amino-acid polypeptide reads, in one-letter code: Protocadherin alpha-11 (949 aa).

Positions 1-29 (MFGFQRRGLGTPRLQLWLLLLEFWEVGSG) are cleaved as a signal peptide. Cadherin domains follow at residues 30–133 (QLHY…PPVF), 157–242 (ASDA…DPDF), 243–349 (DKSE…SPEV), 350–454 (AVTS…APAF), 455–564 (AQPE…APAL), and 580–677 (VPRS…APKA). Topologically, residues 30-696 (QLHYSVSEEA…SPEAALVDVN (667 aa)) are extracellular. N-linked (GlcNAc...) asparagine glycosylation is found at Asn-265 and Asn-304. N-linked (GlcNAc...) asparagine glycosylation occurs at Asn-547. The chain crosses the membrane as a helical span at residues 697-717 (VYLIIAICVVSSLLVLTLLLY). The Cytoplasmic portion of the chain corresponds to 718 to 949 (TALWCSATPT…GNSTTDNSDQ (232 aa)). PXXP repeat units lie at residues 733–736 (PGKP) and 773–776 (PSLP). The 6 X 4 AA repeats of P-X-X-P stretch occupies residues 733–893 (PGKPTLVCSR…PDKFIIPGSP (161 aa)). 3 disordered regions span residues 753 to 807 (RRQR…DWRY), 826 to 858 (ILRAGPGGPDQQWPTVSSATPEPEAGEVSPPVG), and 870 to 889 (YGPGNPKQSGPGELPDKFII). Basic and acidic residues predominate over residues 780-789 (NKEEEGERQE). 4 PXXP repeats span residues 795–798 (PGQP), 831–834 (PGGP), 872–875 (PGNP), and 890–893 (PGSP). The segment at 900-949 (QEPANSQIDKSDFITFGKKEETKKKKKKKKGNKTQEKKEKGNSTTDNSDQ) is disordered. Over residues 908 to 922 (DKSDFITFGKKEETK) the composition is skewed to basic and acidic residues.

The protein resides in the cell membrane. Functionally, potential calcium-dependent cell-adhesion protein. May be involved in the establishment and maintenance of specific neuronal connections in the brain. This is Protocadherin alpha-11 (PCDHA11) from Pan troglodytes (Chimpanzee).